Here is a 487-residue protein sequence, read N- to C-terminus: ATP synthase subunit beta (487 aa).

171–178 (GGAGVGKT) contacts ATP.

The protein belongs to the ATPase alpha/beta chains family. As to quaternary structure, F-type ATPases have 2 components, CF(1) - the catalytic core - and CF(0) - the membrane proton channel. CF(1) has five subunits: alpha(3), beta(3), gamma(1), delta(1), epsilon(1). CF(0) has three main subunits: a(1), b(2) and c(9-12). The alpha and beta chains form an alternating ring which encloses part of the gamma chain. CF(1) is attached to CF(0) by a central stalk formed by the gamma and epsilon chains, while a peripheral stalk is formed by the delta and b chains.

The protein resides in the cell membrane. It carries out the reaction ATP + H2O + 4 H(+)(in) = ADP + phosphate + 5 H(+)(out). Produces ATP from ADP in the presence of a proton gradient across the membrane. The catalytic sites are hosted primarily by the beta subunits. In Leifsonia xyli subsp. xyli (strain CTCB07), this protein is ATP synthase subunit beta.